We begin with the raw amino-acid sequence, 1333 residues long: Vascular endothelial growth factor receptor 1 (1333 aa).

The signal sequence occupies residues 1–22; that stretch reads MVSCWDTAVLPYALLGCLLLTG. Topologically, residues 23–759 are extracellular; that stretch reads YGSGSKLKVP…QGTSDKSNLE (737 aa). Ig-like C2-type domains follow at residues 32 to 124, 152 to 215, 231 to 328, 334 to 429, 430 to 550, 557 to 656, and 662 to 748; these read PELS…AESS, GRQL…VNGH, LDVQ…TSVH, FISV…NVKP, QIYE…RNIK, PNGF…EVLV, and PHLL…AYLT. 2 disulfide bridges follow: cysteine 53–cysteine 108 and cysteine 159–cysteine 208. Asparagine 101, asparagine 165, asparagine 197, and asparagine 252 each carry an N-linked (GlcNAc...) asparagine glycan. Cysteine 253 and cysteine 312 are joined by a disulfide. 8 N-linked (GlcNAc...) asparagine glycosylation sites follow: asparagine 324, asparagine 418, asparagine 475, asparagine 517, asparagine 598, asparagine 626, asparagine 667, and asparagine 714. 2 disulfides stabilise this stretch: cysteine 455–cysteine 536 and cysteine 578–cysteine 637. Residues cysteine 683 and cysteine 732 are joined by a disulfide bond. The helical transmembrane segment at 760–781 threads the bilayer; that stretch reads LITLTCTCVAATLFWLLLTLFI. Residues 782–1333 lie on the Cytoplasmic side of the membrane; that stretch reads RKLKRSSSEV…SVVLYSSPPA (552 aa). The 331-residue stretch at 828–1158 folds into the Protein kinase domain; sequence LKLGKSLGRG…ELVEKLGDLL (331 aa). Residues 834–842 and lysine 862 contribute to the ATP site; that span reads LGRGAFGKV. Tyrosine 915 carries the post-translational modification Phosphotyrosine; by autocatalysis. The interval 947–983 is disordered; sequence EPGLEQGQKPRLDSVSSSSVTSSSFPEDRSVSDVEGD. Low complexity predominate over residues 960–970; it reads SVSSSSVTSSS. Aspartate 1022 serves as the catalytic Proton acceptor. Residues tyrosine 1053, tyrosine 1169, tyrosine 1213, tyrosine 1242, tyrosine 1322, and tyrosine 1328 each carry the phosphotyrosine; by autocatalysis modification.

The protein belongs to the protein kinase superfamily. Tyr protein kinase family. CSF-1/PDGF receptor subfamily. Interacts with VEGFA, VEGFB and PGF. Monomer in the absence of bound VEGFA, VEGFB or PGF. Homodimer in the presence of bound VEGFA, VEGFB and PGF. Can also form a heterodimer with KDR. Interacts (tyrosine phosphorylated) with CBL, CRK, GRB2, NCK1, PIK3R1, PLCG, PSEN1 and PTPN11. Probably interacts with PTPRB. Interacts with RACK1. Identified in a complex with CBL and CD2AP. In terms of processing, N-glycosylated. Ubiquitinated after VEGFA-mediated autophosphorylation, leading to proteolytic degradation. Post-translationally, autophosphorylated on tyrosine residues upon ligand binding. Autophosphorylation occurs in trans, i.e. one subunit of the dimeric receptor phosphorylates tyrosine residues on the other subunit. Phosphorylation at Tyr-1169 is important for interaction with PLCG. Phosphorylation at Tyr-1213 is important for interaction with PIK3R1, PTPN11, GRB2, and PLCG. Phosphorylation at Tyr-1328 is important for endocytosis and for interaction with CBL, NCK1 and CRK. Is probably dephosphorylated by PTPRB.

The protein localises to the cell membrane. It localises to the endosome. The catalysed reaction is L-tyrosyl-[protein] + ATP = O-phospho-L-tyrosyl-[protein] + ADP + H(+). Its activity is regulated as follows. Present in an inactive conformation in the absence of bound ligand. Binding of VEGFA, VEGFB or PGF leads to dimerization and activation by autophosphorylation on tyrosine residues. Tyrosine-protein kinase that acts as a cell-surface receptor for VEGFA, VEGFB and PGF, and plays an essential role in the development of embryonic vasculature, the regulation of angiogenesis, cell survival, cell migration, macrophage function, chemotaxis, and cancer cell invasion. Acts as a positive regulator of postnatal retinal hyaloid vessel regression. May play an essential role as a negative regulator of embryonic angiogenesis by inhibiting excessive proliferation of endothelial cells. Can promote endothelial cell proliferation, survival and angiogenesis in adulthood. Its function in promoting cell proliferation seems to be cell-type specific. Promotes PGF-mediated proliferation of endothelial cells, and proliferation of some types of cancer cells, but does not promote proliferation of normal fibroblasts. Has very high affinity for VEGFA and relatively low protein kinase activity; may function as a negative regulator of VEGFA signaling by limiting the amount of free VEGFA and preventing its binding to KDR. Modulates KDR signaling by forming heterodimers with KDR. Ligand binding leads to the activation of several signaling cascades. Activation of PLCG leads to the production of the cellular signaling molecules diacylglycerol and inositol 1,4,5-trisphosphate and the activation of protein kinase C. Mediates phosphorylation of PIK3R1, the regulatory subunit of phosphatidylinositol 3-kinase, leading to the activation of phosphatidylinositol kinase and the downstream signaling pathway. Mediates activation of MAPK1/ERK2, MAPK3/ERK1 and the MAP kinase signaling pathway, as well as of the AKT1 signaling pathway. Phosphorylates SRC, YES1 and PLCG, and may also phosphorylate CBL. Promotes phosphorylation of AKT1 and PTK2/FAK1. This Mus musculus (Mouse) protein is Vascular endothelial growth factor receptor 1 (Flt1).